A 934-amino-acid chain; its full sequence is Bifunctional uridylyltransferase/uridylyl-removing enzyme (934 aa).

Positions 1-379 (MSAHDLKLEE…TFSRRKRKLS (379 aa)) are uridylyltransferase. The tract at residues 380–736 (DDGAFISENH…AKPHAFEAVT (357 aa)) is uridylyl-removing. In terms of domain architecture, HD spans 496 to 613 (VDEHLLRCIA…IDFADTVQTM (118 aa)). ACT domains follow at residues 737–818 (EITV…DMLA) and 848–931 (VIEV…RSPQ).

The protein belongs to the GlnD family. Mg(2+) serves as cofactor.

It carries out the reaction [protein-PII]-L-tyrosine + UTP = [protein-PII]-uridylyl-L-tyrosine + diphosphate. It catalyses the reaction [protein-PII]-uridylyl-L-tyrosine + H2O = [protein-PII]-L-tyrosine + UMP + H(+). With respect to regulation, uridylyltransferase (UTase) activity is inhibited by glutamine, while glutamine activates uridylyl-removing (UR) activity. In terms of biological role, modifies, by uridylylation and deuridylylation, the PII regulatory proteins (GlnB and homologs), in response to the nitrogen status of the cell that GlnD senses through the glutamine level. Under low glutamine levels, catalyzes the conversion of the PII proteins and UTP to PII-UMP and PPi, while under higher glutamine levels, GlnD hydrolyzes PII-UMP to PII and UMP (deuridylylation). Thus, controls uridylylation state and activity of the PII proteins, and plays an important role in the regulation of nitrogen assimilation and metabolism. In Brucella melitensis biotype 2 (strain ATCC 23457), this protein is Bifunctional uridylyltransferase/uridylyl-removing enzyme.